A 97-amino-acid chain; its full sequence is Protein YukE (97 aa).

Residues 21–94 (VESQEVLNQV…ESTDQDIANQ (74 aa)) are a coiled coil.

The protein belongs to the WXG100 family. sagEsxA-like subfamily. As to quaternary structure, homodimer.

Its subcellular location is the secreted. Functionally, required to deliver LXG toxins to target cells. The polypeptide is Protein YukE (yukE) (Bacillus subtilis (strain 168)).